The following is a 434-amino-acid chain: Putative peptidase B (434 aa).

Positions 198 and 203 each coordinate Mn(2+). The active site involves lysine 210. 3 residues coordinate Mn(2+): aspartate 221, aspartate 280, and glutamate 282. Arginine 284 is a catalytic residue.

The protein belongs to the peptidase M17 family. As to quaternary structure, homohexamer. Mn(2+) is required as a cofactor.

It is found in the cytoplasm. The catalysed reaction is Release of an N-terminal amino acid, Xaa, from a peptide or arylamide. Xaa is preferably Glu or Asp but may be other amino acids, including Leu, Met, His, Cys and Gln.. Its function is as follows. Probably plays an important role in intracellular peptide degradation. The protein is Putative peptidase B of Haemophilus influenzae (strain ATCC 51907 / DSM 11121 / KW20 / Rd).